A 1222-amino-acid polypeptide reads, in one-letter code: ATP-dependent helicase/nuclease subunit A (1222 aa).

Residues 39-495 (QKRTAQQIEA…ILLKENFRSQ (457 aa)) enclose the UvrD-like helicase ATP-binding domain. Residue 60 to 67 (ASAGSGKT) participates in ATP binding. In terms of domain architecture, UvrD-like helicase C-terminal spans 524 to 810 (QLIAGSHAQT…NLMTIHKSKG (287 aa)).

The protein belongs to the helicase family. AddA subfamily. As to quaternary structure, heterodimer of AddA and AddB/RexB. Mg(2+) is required as a cofactor.

It carries out the reaction Couples ATP hydrolysis with the unwinding of duplex DNA by translocating in the 3'-5' direction.. The enzyme catalyses ATP + H2O = ADP + phosphate + H(+). In terms of biological role, the heterodimer acts as both an ATP-dependent DNA helicase and an ATP-dependent, dual-direction single-stranded exonuclease. Recognizes the chi site generating a DNA molecule suitable for the initiation of homologous recombination. The AddA nuclease domain is required for chi fragment generation; this subunit has the helicase and 3' -&gt; 5' nuclease activities. The protein is ATP-dependent helicase/nuclease subunit A of Streptococcus pyogenes serotype M28 (strain MGAS6180).